Here is a 365-residue protein sequence, read N- to C-terminus: Chorismate synthase (365 aa).

Arg-48 and Arg-54 together coordinate NADP(+). Residues 131 to 133 (RSS), 243 to 244 (NA), Gly-288, 303 to 307 (KPTSS), and Arg-329 contribute to the FMN site.

Belongs to the chorismate synthase family. In terms of assembly, homotetramer. The cofactor is FMNH2.

The catalysed reaction is 5-O-(1-carboxyvinyl)-3-phosphoshikimate = chorismate + phosphate. It functions in the pathway metabolic intermediate biosynthesis; chorismate biosynthesis; chorismate from D-erythrose 4-phosphate and phosphoenolpyruvate: step 7/7. In terms of biological role, catalyzes the anti-1,4-elimination of the C-3 phosphate and the C-6 proR hydrogen from 5-enolpyruvylshikimate-3-phosphate (EPSP) to yield chorismate, which is the branch point compound that serves as the starting substrate for the three terminal pathways of aromatic amino acid biosynthesis. This reaction introduces a second double bond into the aromatic ring system. The chain is Chorismate synthase from Rhizobium etli (strain ATCC 51251 / DSM 11541 / JCM 21823 / NBRC 15573 / CFN 42).